The sequence spans 122 residues: Large ribosomal subunit protein uL14 (122 aa).

It belongs to the universal ribosomal protein uL14 family. As to quaternary structure, part of the 50S ribosomal subunit. Forms a cluster with proteins L3 and L19. In the 70S ribosome, L14 and L19 interact and together make contacts with the 16S rRNA in bridges B5 and B8.

In terms of biological role, binds to 23S rRNA. Forms part of two intersubunit bridges in the 70S ribosome. The protein is Large ribosomal subunit protein uL14 of Rhizobium meliloti (strain 1021) (Ensifer meliloti).